A 162-amino-acid chain; its full sequence is Small ribosomal subunit protein bS16 (162 aa).

The segment at 113–162 (ADGGPTTEATKPKKKSPAKKAAKAAEPAPQPEQPDTPALGGEQAELTAES) is disordered. Positions 124-134 (PKKKSPAKKAA) are enriched in basic residues.

Belongs to the bacterial ribosomal protein bS16 family.

The protein is Small ribosomal subunit protein bS16 of Mycobacterium tuberculosis (strain ATCC 25177 / H37Ra).